The primary structure comprises 341 residues: Guanine nucleotide-binding protein subunit beta (341 aa).

7 WD repeats span residues 54–84 (GHLA…IVWD), 96–126 (LRSS…SIYS), 142–171 (GHTG…ALWD), 183–213 (GHTG…KLWD), 225–255 (GHES…RLFD), 269–299 (NIIC…NVWD), and 311–341 (GHDN…KIWN).

This sequence belongs to the WD repeat G protein beta family. G proteins are composed of 3 units, alpha, beta and gamma.

Functionally, guanine nucleotide-binding proteins (G proteins) are involved as a modulator or transducer in various transmembrane signaling systems. The beta and gamma chains are required for the GTPase activity, for replacement of GDP by GTP, and for G protein-effector interaction. The polypeptide is Guanine nucleotide-binding protein subunit beta (Lymnaea stagnalis (Great pond snail)).